A 712-amino-acid chain; its full sequence is DNA ligase (712 aa).

NAD(+) contacts are provided by residues 53–57, 103–104, and Glu-133; these read DAEFD and SL. Lys-135 serves as the catalytic N6-AMP-lysine intermediate. 4 residues coordinate NAD(+): Arg-156, Glu-196, Lys-315, and Lys-339. Residues Cys-433, Cys-436, Cys-452, and Cys-458 each coordinate Zn(2+). A BRCT domain is found at 622–711; it reads SIERTLEGLS…PERDAEDGEP (90 aa).

Belongs to the NAD-dependent DNA ligase family. LigA subfamily. The cofactor is Mg(2+). It depends on Mn(2+) as a cofactor.

The catalysed reaction is NAD(+) + (deoxyribonucleotide)n-3'-hydroxyl + 5'-phospho-(deoxyribonucleotide)m = (deoxyribonucleotide)n+m + AMP + beta-nicotinamide D-nucleotide.. In terms of biological role, DNA ligase that catalyzes the formation of phosphodiester linkages between 5'-phosphoryl and 3'-hydroxyl groups in double-stranded DNA using NAD as a coenzyme and as the energy source for the reaction. It is essential for DNA replication and repair of damaged DNA. The sequence is that of DNA ligase from Mycolicibacterium gilvum (strain PYR-GCK) (Mycobacterium gilvum (strain PYR-GCK)).